Reading from the N-terminus, the 350-residue chain is Peroxidase 10 (350 aa).

The first 27 residues, 1 to 27 (MDHKMSMYLFVSYLAIFTLFFKGFVSS), serve as a signal peptide directing secretion. Cystine bridges form between cysteine 57-cysteine 137, cysteine 90-cysteine 95, cysteine 143-cysteine 346, and cysteine 222-cysteine 256. Catalysis depends on histidine 88, which acts as the Proton acceptor. Residues aspartate 89, valine 92, glycine 94, aspartate 96, and serine 98 each contribute to the Ca(2+) site. A glycan (N-linked (GlcNAc...) asparagine) is linked at asparagine 102. Position 185 (proline 185) interacts with substrate. N-linked (GlcNAc...) asparagine glycosylation is present at asparagine 193. A heme b-binding site is contributed by histidine 215. Ca(2+) is bound at residue threonine 216. Aspartate 270, serine 273, and aspartate 278 together coordinate Ca(2+).

This sequence belongs to the peroxidase family. Classical plant (class III) peroxidase subfamily. It depends on heme b as a cofactor. The cofactor is Ca(2+). As to expression, expressed in the whole plant, with the highest expression in roots.

Its subcellular location is the secreted. The enzyme catalyses 2 a phenolic donor + H2O2 = 2 a phenolic radical donor + 2 H2O. Removal of H(2)O(2), oxidation of toxic reductants, biosynthesis and degradation of lignin, suberization, auxin catabolism, response to environmental stresses such as wounding, pathogen attack and oxidative stress. These functions might be dependent on each isozyme/isoform in each plant tissue. The chain is Peroxidase 10 (PER10) from Arabidopsis thaliana (Mouse-ear cress).